Reading from the N-terminus, the 61-residue chain is Protein A40 homolog (61 aa).

At 1–11 the chain is on the cytoplasmic side; that stretch reads MTMNKPKTNYA. The chain crosses the membrane as a helical; Signal-anchor for type II membrane protein span at residues 12–32; the sequence is GYACCVICGLIVGIIFTATLL. Residues 33–61 lie on the Extracellular side of the membrane; sequence KAVERKLIHTPLIDKTIKDAYIREDCPTD.

It belongs to the poxviridae A40 protein family.

Its subcellular location is the host membrane. This is Protein A40 homolog (A45R) from Homo sapiens (Human).